Here is a 377-residue protein sequence, read N- to C-terminus: Putative F-box only protein 10 (377 aa).

Residues 1–46 enclose the F-box domain; the sequence is MVSVNLPWELVEEILYRVPPQSLARFRTVCKQWNSLFDDNKFVNDH.

This Arabidopsis thaliana (Mouse-ear cress) protein is Putative F-box only protein 10 (FBX10).